The chain runs to 546 residues: Probable Xaa-Pro aminopeptidase pepP (546 aa).

Residues D341, D352, E475, and E515 each coordinate Mn(2+).

It belongs to the peptidase M24B family. It depends on Mn(2+) as a cofactor.

It carries out the reaction Release of any N-terminal amino acid, including proline, that is linked to proline, even from a dipeptide or tripeptide.. Functionally, catalyzes the removal of a penultimate prolyl residue from the N-termini of peptides. The sequence is that of Probable Xaa-Pro aminopeptidase pepP (pepP) from Sclerotinia sclerotiorum (strain ATCC 18683 / 1980 / Ss-1) (White mold).